A 247-amino-acid polypeptide reads, in one-letter code: Protein GrpE (247 aa).

Positions 31 to 49 (QKEETKTTNKDNQKEDETV) are enriched in basic and acidic residues. The tract at residues 31-79 (QKEETKTTNKDNQKEDETVKNQSNQSNQSNQTKQTNTKQQKHQPKENSH) is disordered. Residues 50 to 68 (KNQSNQSNQSNQTKQTNTK) are compositionally biased toward low complexity.

It belongs to the GrpE family. As to quaternary structure, homodimer.

It localises to the cytoplasm. Functionally, participates actively in the response to hyperosmotic and heat shock by preventing the aggregation of stress-denatured proteins, in association with DnaK and GrpE. It is the nucleotide exchange factor for DnaK and may function as a thermosensor. Unfolded proteins bind initially to DnaJ; upon interaction with the DnaJ-bound protein, DnaK hydrolyzes its bound ATP, resulting in the formation of a stable complex. GrpE releases ADP from DnaK; ATP binding to DnaK triggers the release of the substrate protein, thus completing the reaction cycle. Several rounds of ATP-dependent interactions between DnaJ, DnaK and GrpE are required for fully efficient folding. The chain is Protein GrpE from Onion yellows phytoplasma (strain OY-M).